The primary structure comprises 181 residues: UPF0301 protein COXBURSA331_A2219 (181 aa).

It belongs to the UPF0301 (AlgH) family.

The polypeptide is UPF0301 protein COXBURSA331_A2219 (Coxiella burnetii (strain RSA 331 / Henzerling II)).